Here is a 219-residue protein sequence, read N- to C-terminus: Glutathione S-transferase (219 aa).

Residues 2–89 (SQPILGYWDI…YLGRKYKLNG (88 aa)) enclose the GST N-terminal domain. Glutathione-binding positions include 8 to 9 (YW), 44 to 47 (RSEW), K51, 60 to 61 (NL), and 73 to 74 (QT). Residues 91–207 (NDHEEIRISM…YIKKQQPKTF (117 aa)) enclose the GST C-terminal domain. Y117 provides a ligand contact to substrate.

It belongs to the GST superfamily. Mu family. Homodimer.

The protein localises to the cytoplasm. It carries out the reaction RX + glutathione = an S-substituted glutathione + a halide anion + H(+). This Dermatophagoides pteronyssinus (European house dust mite) protein is Glutathione S-transferase.